A 139-amino-acid chain; its full sequence is MVHNDLDFIFYNNLKHSSGAIEHLGDNLTGDGDXDDEEIIIDLSLIPQNISRINFTVTIHEAGERSQNFGQVSNAYVRVVNSDNSQELLKYDLGEDFSIETAIVVAEIYRHNGEWKFNAIGSGFQGGLAALCRNFGLNV.

This sequence belongs to the CAPAB/TerDEXZ family.

Its function is as follows. Not known; could confer methyl methane sulfonate (MMS), mitomycin C (MC), and UV resistance. This chain is Chemical-damaging agent resistance protein B, found in Clostridium acetobutylicum.